We begin with the raw amino-acid sequence, 547 residues long: Probable bifunctional tRNA threonylcarbamoyladenosine biosynthesis protein (547 aa).

The segment at 1 to 329 (MGNSNELICI…FRTDMVDVNW (329 aa)) is kae1. Positions 112, 116, and 133 each coordinate Fe cation. L-threonylcarbamoyladenylate contacts are provided by residues 133–137 (YVSGG), aspartate 165, glycine 178, glutamate 182, and asparagine 262. Aspartate 290 provides a ligand contact to Fe cation. A Protein kinase domain is found at 346-547 (QIPRHLIGKG…KEVEKRGRYL (202 aa)). Residues 352-360 (IGKGAEADI) and lysine 373 each bind ATP. The active-site Proton acceptor; for kinase activity is aspartate 465.

The protein in the N-terminal section; belongs to the KAE1 / TsaD family. This sequence in the C-terminal section; belongs to the protein kinase superfamily. Tyr protein kinase family. BUD32 subfamily. Component of the KEOPS complex that consists of Kae1, Bud32, Cgi121 and Pcc1; the whole complex dimerizes. Fe(2+) is required as a cofactor.

Its subcellular location is the cytoplasm. It carries out the reaction L-seryl-[protein] + ATP = O-phospho-L-seryl-[protein] + ADP + H(+). The catalysed reaction is L-threonyl-[protein] + ATP = O-phospho-L-threonyl-[protein] + ADP + H(+). It catalyses the reaction L-threonylcarbamoyladenylate + adenosine(37) in tRNA = N(6)-L-threonylcarbamoyladenosine(37) in tRNA + AMP + H(+). Functionally, required for the formation of a threonylcarbamoyl group on adenosine at position 37 (t(6)A37) in tRNAs that read codons beginning with adenine. Is a component of the KEOPS complex that is probably involved in the transfer of the threonylcarbamoyl moiety of threonylcarbamoyl-AMP (TC-AMP) to the N6 group of A37. The Kae1 domain likely plays a direct catalytic role in this reaction. The Bud32 domain probably displays kinase activity that regulates Kae1 function. In Methanococcus vannielii (strain ATCC 35089 / DSM 1224 / JCM 13029 / OCM 148 / SB), this protein is Probable bifunctional tRNA threonylcarbamoyladenosine biosynthesis protein.